The following is a 929-amino-acid chain: Dual serine/threonine and tyrosine protein kinase (929 aa).

The span at 1-14 (MEGDGVPWGSEPVS) shows a compositional bias: low complexity. Residues 1–21 (MEGDGVPWGSEPVSGPGPGGG) form a disordered region. Coiled coils occupy residues 189 to 215 (EEDL…MHHA) and 395 to 431 (RKKE…KEEL). A Protein kinase domain is found at 652-906 (PKLGQELGRG…PLLGIVQPML (255 aa)). ATP-binding positions include 658 to 666 (LGRGQYGVV) and K681. The active-site Proton acceptor is the D777.

It belongs to the protein kinase superfamily. Ser/Thr protein kinase family. Predominantly expressed in skeletal muscle and testis. Expressed in basolateral and apical membranes of all tubular epithelia. Expressed in thin ascending limb of the loop of Henle and the distal convoluted tubule. Expressed in all layers of transitional ureteric epithelium and in the ureteric smooth-muscle cells. Weakly expressed in heart, brain, placenta, kidney, pancreas, spleen, thymus, prostate, uterus, small intestine, white blood cells, stomach, spinal cord and adrenal gland. Is widely distributed in the CNS. Also detected in several tumor cell lines. Expressed in the skin.

The protein localises to the cytoplasm. It localises to the cell membrane. It is found in the apical cell membrane. The protein resides in the basolateral cell membrane. Its subcellular location is the cell junction. The enzyme catalyses L-seryl-[protein] + ATP = O-phospho-L-seryl-[protein] + ADP + H(+). It catalyses the reaction L-threonyl-[protein] + ATP = O-phospho-L-threonyl-[protein] + ADP + H(+). The catalysed reaction is L-tyrosyl-[protein] + ATP = O-phospho-L-tyrosyl-[protein] + ADP + H(+). Acts as a positive regulator of ERK phosphorylation downstream of fibroblast growth factor-receptor activation. Involved in the regulation of both caspase-dependent apoptosis and caspase-independent cell death. In the skin, it plays a predominant role in suppressing caspase-dependent apoptosis in response to UV stress in a range of dermal cell types. The polypeptide is Dual serine/threonine and tyrosine protein kinase (DSTYK) (Homo sapiens (Human)).